The chain runs to 415 residues: Serine hydroxymethyltransferase (415 aa).

(6S)-5,6,7,8-tetrahydrofolate is bound by residues leucine 122 and 126 to 128; that span reads GHL. Lysine 230 is subject to N6-(pyridoxal phosphate)lysine.

The protein belongs to the SHMT family. As to quaternary structure, homodimer. Pyridoxal 5'-phosphate serves as cofactor.

The protein resides in the cytoplasm. The enzyme catalyses (6R)-5,10-methylene-5,6,7,8-tetrahydrofolate + glycine + H2O = (6S)-5,6,7,8-tetrahydrofolate + L-serine. Its pathway is one-carbon metabolism; tetrahydrofolate interconversion. It participates in amino-acid biosynthesis; glycine biosynthesis; glycine from L-serine: step 1/1. Catalyzes the reversible interconversion of serine and glycine with tetrahydrofolate (THF) serving as the one-carbon carrier. This reaction serves as the major source of one-carbon groups required for the biosynthesis of purines, thymidylate, methionine, and other important biomolecules. Also exhibits THF-independent aldolase activity toward beta-hydroxyamino acids, producing glycine and aldehydes, via a retro-aldol mechanism. The protein is Serine hydroxymethyltransferase of Cupriavidus taiwanensis (strain DSM 17343 / BCRC 17206 / CCUG 44338 / CIP 107171 / LMG 19424 / R1) (Ralstonia taiwanensis (strain LMG 19424)).